Reading from the N-terminus, the 174-residue chain is Putative serine protease 46 (174 aa).

Residues 43–174 form the Peptidase S1 domain; sequence VVKGKLVEVG…IGWGTTGKKG (132 aa). A disulfide bridge links Cys68 with Cys84. Catalysis depends on charge relay system residues His83 and Asp128.

This sequence belongs to the peptidase S1 family.

The polypeptide is Putative serine protease 46 (Homo sapiens (Human)).